The following is a 235-amino-acid chain: Orotidine 5'-phosphate decarboxylase (235 aa).

Residues D12, K34, 61–70 (DMKLLDIDNT), T116, R177, Q186, and R207 contribute to the substrate site. The active-site Proton donor is K63.

It belongs to the OMP decarboxylase family. Type 1 subfamily. As to quaternary structure, homodimer.

The enzyme catalyses orotidine 5'-phosphate + H(+) = UMP + CO2. Its pathway is pyrimidine metabolism; UMP biosynthesis via de novo pathway; UMP from orotate: step 2/2. In terms of biological role, catalyzes the decarboxylation of orotidine 5'-monophosphate (OMP) to uridine 5'-monophosphate (UMP). The polypeptide is Orotidine 5'-phosphate decarboxylase (Rhizobium etli (strain CIAT 652)).